An 87-amino-acid polypeptide reads, in one-letter code: Small ribosomal subunit protein bS20 (87 aa).

Positions 1–26 are disordered; the sequence is MANIKSAKKRAVQSEKARKHNASRRS.

Belongs to the bacterial ribosomal protein bS20 family.

Its function is as follows. Binds directly to 16S ribosomal RNA. In Enterobacter sp. (strain 638), this protein is Small ribosomal subunit protein bS20.